Here is a 287-residue protein sequence, read N- to C-terminus: Prepilin leader peptidase/N-methyltransferase (287 aa).

The chain crosses the membrane as a helical span at residues 12–32 (FMYLVVGLFSLAVGSLLNVII). 4 residues coordinate Zn(2+): Cys-71, Cys-74, Cys-96, and Cys-99. Helical transmembrane passes span 127–147 (FTIQ…LVFI), 158–178 (LTLG…FVSL), 182–202 (VLSC…FYLM), 215–235 (LFAA…LLIS), and 259–279 (PFGP…DSII).

It belongs to the peptidase A24 family. Zn(2+) serves as cofactor.

It localises to the cell inner membrane. The enzyme catalyses Typically cleaves a -Gly-|-Phe- bond to release an N-terminal, basic peptide of 5-8 residues from type IV prepilin, and then N-methylates the new N-terminal amino group, the methyl donor being S-adenosyl-L-methionine.. Plays an essential role in type IV pili and type II pseudopili formation by proteolytically removing the leader sequence from substrate proteins and subsequently monomethylating the alpha-amino group of the newly exposed N-terminal phenylalanine. The sequence is that of Prepilin leader peptidase/N-methyltransferase (pilD) from Legionella pneumophila.